The chain runs to 951 residues: MSAREVAVLLLWLSCYGSALWRYSTNSPNYRIFSTRSTIKLEYEGTLFTEWSVPETCFVLNKSSPTTELRCSSPGVHAIKPIVTGPDEEERYLFVESSHTCFLWYYRVRHFFNNFTQLITVWAYDPESADPDELLGNAEEPSINSIVLSTQMATLGQKPVIHTVLKRKVYSSNEKMRRGTWRIVVPMTKDDALKEIRGNQVTFQDCFIADFLILLTFPLLTIPEIPGYLPISSPRGSQLMASWDACVVASAVLVTDMETFHTTDSFKSWTRIRVPPDILSDDERRSVAHVILSRDGIVFLINGVLYIKSFRGFIRLGGIVNLPDGGITGISSRKWCWVNYLLKAKGRRSTFAVWTENEIYLGSILLKFARLVTTTELKNILSLSVTATLTIDRVEYTGHPLEIAVFLNYCTVCNVTKKIFLVIYNEDTKQWVSQDFTLDAPIDSVTMPHFTFSALPGLLLWNKHSIYYCYHNFTFTGILQTPAGHGNLSMLSNDSIIHEVFIDYYGDILVKMENNVIFYSKINTRDAVKLHLWTNYTTRAFIFLSTSGQTYFLYALDDGTIQIQDYPLHLEAQSIAFTTKDKCPYMAFHNNVAHVFYFLDKGEALTVWTQIVYPENTGLYVIVESYGPKILQESHEISFEAAFGYCTKTLTLTFYQNVDYERISDYFETQDKHTGLVLVQFRPSEYSKACPIAQKVFQIAVGCDDKKFIAIKGFSKKGCHHHDFSYVIEKSYLRHQPSKNLRVRYIWGEYGCPLRLDFTEKFQPVVQLFDDNGYVKDVEANFIVWEIHGRDDYSFNNTMAQSGCLHEAQTWKSMIELNKHLPLEEVWGPENYKHCFSYAIGKPGDLNQPYEIINSSNGNHIFWPMGHSGMYVFRVKILDPNYSFCNLTAMFAIETFGLIPSPSVYLVASFLFVLMLLFFTILVLSYFRYMRIYRRYIYEPLHKPQRKRKKN.

An N-terminal signal peptide occupies residues 1 to 19; that stretch reads MSAREVAVLLLWLSCYGSA. Topologically, residues 20 to 903 are extracellular; it reads LWRYSTNSPN…ETFGLIPSPS (884 aa). Cystine bridges form between cysteine 57/cysteine 71, cysteine 101/cysteine 206, cysteine 246/cysteine 336, and cysteine 410/cysteine 413. 2 N-linked (GlcNAc...) asparagine glycosylation sites follow: asparagine 61 and asparagine 114. 5 N-linked (GlcNAc...) asparagine glycosylation sites follow: asparagine 414, asparagine 472, asparagine 487, asparagine 493, and asparagine 535. Cystine bridges form between cysteine 583–cysteine 690, cysteine 703–cysteine 885, cysteine 719–cysteine 752, and cysteine 804–cysteine 835. Residue asparagine 796 is glycosylated (N-linked (GlcNAc...) asparagine). N-linked (GlcNAc...) asparagine glycans are attached at residues asparagine 854, asparagine 881, and asparagine 886. A helical transmembrane segment spans residues 904–924; it reads VYLVASFLFVLMLLFFTILVL. At 925–951 the chain is on the cytoplasmic side; the sequence is SYFRYMRIYRRYIYEPLHKPQRKRKKN.

It belongs to the CATSPERD family. Component of the CatSper complex or CatSpermasome composed of the core pore-forming members CATSPER1, CATSPER2, CATSPER3 and CATSPER4 as well as auxiliary members CATSPERB, CATSPERG, CATSPERD, CATSPERE, CATSPERZ, C2CD6/CATSPERT, TMEM249, TMEM262 and EFCAB9. HSPA1 may be an additional auxiliary complex member. The core complex members CATSPER1, CATSPER2, CATSPER3 and CATSPER4 form a heterotetrameric channel. The auxiliary CATSPERB, CATSPERG, CATSPERD and CATSPERE subunits form a pavilion-like structure over the pore which stabilizes the complex through interactions with CATSPER4, CATSPER3, CATSPER1 and CATSPER2 respectively. TMEM262/CATSPERH interacts with CATSPERB, further stabilizing the complex. C2CD6/CATSPERT interacts at least with CATSPERD and is required for targeting the CatSper complex in the flagellar membrane.

Its subcellular location is the cell projection. It localises to the cilium. The protein resides in the flagellum membrane. Auxiliary component of the CatSper complex, a complex involved in sperm cell hyperactivation. Sperm cell hyperactivation is needed for sperm motility which is essential late in the preparation of sperm for fertilization. In Homo sapiens (Human), this protein is Cation channel sperm-associated auxiliary subunit epsilon.